The sequence spans 449 residues: Sensor protein QseC (449 aa).

The Cytoplasmic segment spans residues 1–12; it reads MKFTQRLSLRVR. The chain crosses the membrane as a helical span at residues 13–33; it reads LTLIFLILASVTWLLSSFVAW. Topologically, residues 34 to 156 are periplasmic; sequence KQTTDNVDEL…QEWEYREDMA (123 aa). The chain crosses the membrane as a helical span at residues 157-177; it reads LAIVAGQLIPWLVALPIMLII. At 178–449 the chain is on the cytoplasmic side; it reads MMVLLGRELA…QGGFEAKVSW (272 aa). Positions 243-449 constitute a Histidine kinase domain; that stretch reads DAAHELRSPL…QGGFEAKVSW (207 aa). Histidine 246 carries the phosphohistidine; by autocatalysis modification.

Its subcellular location is the cell inner membrane. It carries out the reaction ATP + protein L-histidine = ADP + protein N-phospho-L-histidine.. Member of a two-component regulatory system QseB/QseC. Activates the flagella regulon by activating transcription of FlhDC. May activate QseB by phosphorylation. This chain is Sensor protein QseC (qseC), found in Escherichia coli (strain K12).